The chain runs to 151 residues: Chaperonin GroEL (151 aa).

41–45 lines the ATP pocket; it reads DGTTT.

Belongs to the chaperonin (HSP60) family. As to quaternary structure, forms a cylinder of 14 subunits composed of two heptameric rings stacked back-to-back. Interacts with the co-chaperonin GroES.

It is found in the cytoplasm. The enzyme catalyses ATP + H2O + a folded polypeptide = ADP + phosphate + an unfolded polypeptide.. Together with its co-chaperonin GroES, plays an essential role in assisting protein folding. The GroEL-GroES system forms a nano-cage that allows encapsulation of the non-native substrate proteins and provides a physical environment optimized to promote and accelerate protein folding. The protein is Chaperonin GroEL of Mycobacterium avium.